Here is a 249-residue protein sequence, read N- to C-terminus: Polyhedrin (249 aa).

This sequence belongs to the polyhedrin family.

Its function is as follows. Major component of the virus occlusion bodies, which are large proteinaceous structures (polyhedra), that protect the virus from the outside environment for extended periods until they are ingested by insect larvae. The polypeptide is Polyhedrin (PH) (Lepidoptera (butterflies and moths)).